Here is a 186-residue protein sequence, read N- to C-terminus: Large ribosomal subunit protein uL5 (186 aa).

This sequence belongs to the universal ribosomal protein uL5 family. As to quaternary structure, part of the 50S ribosomal subunit; part of the 5S rRNA/L5/L18/L25 subcomplex. Contacts the 5S rRNA and the P site tRNA. Forms a bridge to the 30S subunit in the 70S ribosome.

Functionally, this is one of the proteins that bind and probably mediate the attachment of the 5S RNA into the large ribosomal subunit, where it forms part of the central protuberance. In the 70S ribosome it contacts protein S13 of the 30S subunit (bridge B1b), connecting the 2 subunits; this bridge is implicated in subunit movement. Contacts the P site tRNA; the 5S rRNA and some of its associated proteins might help stabilize positioning of ribosome-bound tRNAs. This is Large ribosomal subunit protein uL5 from Porphyromonas gingivalis (strain ATCC 33277 / DSM 20709 / CIP 103683 / JCM 12257 / NCTC 11834 / 2561).